The chain runs to 115 residues: Large ribosomal subunit protein uL18 (115 aa).

It belongs to the universal ribosomal protein uL18 family. In terms of assembly, part of the 50S ribosomal subunit; part of the 5S rRNA/L5/L18/L25 subcomplex. Contacts the 5S and 23S rRNAs.

Its function is as follows. This is one of the proteins that bind and probably mediate the attachment of the 5S RNA into the large ribosomal subunit, where it forms part of the central protuberance. In Baumannia cicadellinicola subsp. Homalodisca coagulata, this protein is Large ribosomal subunit protein uL18.